A 513-amino-acid chain; its full sequence is uncharacterized protein (513 aa).

The HDOD domain maps to 254-447 (IPQLPSKLLE…INTIRFHHNL (194 aa)).

This is an uncharacterized protein from Treponema pallidum (strain Nichols).